Consider the following 244-residue polypeptide: DNA repair protein RecO (244 aa).

Belongs to the RecO family.

In terms of biological role, involved in DNA repair and RecF pathway recombination. This is DNA repair protein RecO from Geobacter metallireducens (strain ATCC 53774 / DSM 7210 / GS-15).